The sequence spans 200 residues: Ras-related protein Rab-10 (200 aa).

The GTP site is built by S18, G19, V20, G21, K22, T23, C24, N35, T36, S40, and T41. Residue T23 coordinates Mg(2+). Short sequence motifs (switch) lie at residues 32-46 and 64-81; these read DAFN…GIDF and DTAG…YYRG. Residues T41 and D64 each coordinate Mg(2+). G67 provides a ligand contact to GTP. T73 carries the phosphothreonine; by LRRK2 modification. K102 is subject to N6-acetyllysine. A Glycyl lysine isopeptide (Lys-Gly) (interchain with G-Cter in ubiquitin) cross-link involves residue K102. Residues N122, K123, D125, and M126 each contribute to the GTP site. K136 participates in a covalent cross-link: Glycyl lysine isopeptide (Lys-Gly) (interchain with G-Cter in ubiquitin). Residues S152, A153, and K154 each coordinate GTP. A Glycyl lysine isopeptide (Lys-Gly) (interchain with G-Cter in ubiquitin) cross-link involves residue K154. S-geranylgeranyl cysteine attachment occurs at residues C199 and C200.

It belongs to the small GTPase superfamily. Rab family. Interacts with MYO5A; mediates the transport to the plasma membrane of SLC2A4/GLUT4 storage vesicles. Interacts with GDI1 and with GDI2; negatively regulates RAB10 association with membranes and activation. Interacts (GDP-bound form) with LLGL1; the interaction is direct and promotes RAB10 association with membranes and activation through competition with the Rab inhibitor GDI1. Interacts with EXOC4; probably associates with the exocyst. Interacts (GTP-bound form) with MICALCL, MICAL1, MICAL3, EHBP1 and EHBP1L1; at least in case of MICAL1 two molecules of RAB10 can bind to one molecule of MICAL1. Interacts with TBC1D13. Interacts with SEC16A. Interacts with CHM and CHML. Interacts with LRRK2; interaction facilitates phosphorylation of Thr-73. Interacts (when phosphorylated on Thr-73) with RILPL1 and RILPL2. Interacts with TBC1D21. Interacts with MARCKS. Mg(2+) is required as a cofactor. Post-translationally, ubiquitinated upon Legionella pneumophila infection. Ubiquitination does not lead to proteasomal degradation. Phosphorylation of Thr-73 in the switch II region by LRRK2 prevents the association of dRAB regulatory proteins, including CHM, CHML and RAB GDP dissociation inhibitors GDI1 and GDI2. Phosphorylation of Thr-73 by LRRK2 is stimulated by RAB29 and RAB32. Phosphorylation by LRRK2 is required for localization to stressed lysosomes. As to expression, expressed in the hippocampus. Expressed in neutrophils (at protein level). Expressed in the testis (at protein level).

It is found in the cytoplasmic vesicle membrane. It localises to the golgi apparatus membrane. The protein localises to the golgi apparatus. The protein resides in the trans-Golgi network membrane. Its subcellular location is the endosome membrane. It is found in the recycling endosome membrane. It localises to the cytoplasmic vesicle. The protein localises to the phagosome membrane. The protein resides in the cytoplasm. Its subcellular location is the cytoskeleton. It is found in the cilium basal body. It localises to the endoplasmic reticulum membrane. The protein localises to the perinuclear region. The protein resides in the lysosome. It catalyses the reaction GTP + H2O = GDP + phosphate + H(+). Regulated by guanine nucleotide exchange factors (GEFs) DENND4C and RABIF which promote the exchange of bound GDP for free GTP. Regulated by GTPase activating proteins (GAPs) including TBC1D21 which increase the GTP hydrolysis activity. Inhibited by GDP dissociation inhibitors GDI1 and GDI2 which prevent Rab-GDP dissociation. Functionally, the small GTPases Rab are key regulators of intracellular membrane trafficking, from the formation of transport vesicles to their fusion with membranes. Rabs cycle between an inactive GDP-bound form and an active GTP-bound form that is able to recruit to membranes different set of downstream effectors directly responsible for vesicle formation, movement, tethering and fusion. That Rab is mainly involved in the biosynthetic transport of proteins from the Golgi to the plasma membrane. Regulates, for instance, SLC2A4/GLUT4 glucose transporter-enriched vesicles delivery to the plasma membrane. In parallel, it regulates the transport of TLR4, a toll-like receptor to the plasma membrane and therefore may be important for innate immune response. Also plays a specific role in asymmetric protein transport to the plasma membrane. In neurons, it is involved in axonogenesis through regulation of vesicular membrane trafficking toward the axonal plasma membrane. In epithelial cells, it regulates transport from the Golgi to the basolateral membrane. May play a role in the basolateral recycling pathway and in phagosome maturation. May play a role in endoplasmic reticulum dynamics and morphology controlling tubulation along microtubules and tubules fusion. Together with LRRK2, RAB8A, and RILPL1, it regulates ciliogenesis. When phosphorylated by LRRK2 on Thr-73, binds RILPL1 and inhibits ciliogenesis. Participates in the export of a subset of neosynthesized proteins through a Rab8-Rab10-Rab11-dependent endososomal export route. Targeted to and stabilized on stressed lysosomes through LRRK2 phosphorylation where it promotes the extracellular release of lysosomal content through EHBP1 and EHNP1L1 effector proteins. Its function is as follows. (Microbial infection) Upon Legionella pneumophila infection promotes endoplasmic reticulum recruitment and bacterial replication. Plays a role in remodeling the Legionella-containing vacuole (LCV) into an endoplasmic reticulum-like vacuole. This chain is Ras-related protein Rab-10, found in Homo sapiens (Human).